The sequence spans 373 residues: 2-oxoglutarate oxidoreductase subunit KorB (373 aa).

The interval 26-50 is disordered; it reads TPSLTKNAGVPTTDQPQKGKDFTSD. The span at 27–41 shows a compositional bias: polar residues; it reads PSLTKNAGVPTTDQP.

In terms of assembly, KG oxidoreductase (KOR) is composed of KorA and KorB subunits. The cofactor is Mg(2+).

It carries out the reaction 2 oxidized [2Fe-2S]-[ferredoxin] + 2-oxoglutarate + CoA = succinyl-CoA + 2 reduced [2Fe-2S]-[ferredoxin] + CO2 + H(+). It participates in carbohydrate metabolism; tricarboxylic acid cycle. Functionally, component of KG oxidoreductase (KOR) that catalyzes the CoA-dependent oxidative decarboxylation of 2-oxoglutarate (alpha-ketoglutarate, KG) to succinyl-CoA. Methyl viologen can act as electron acceptor in vitro; the physiologic electron acceptor is unknown. Is involved in the alternative TCA pathway that functions concurrently with fatty acid beta-oxidation. Since a growing body of evidence indicates that lipids (for example cholesterol and fatty acids) are a predominant growth substrate for M.tuberculosis during infection, flux through KOR likely represents an important step in intermediary metabolism in vivo. KOR-dependent decarboxylation of KG also appears to be an important source of CO(2) in M.tuberculosis metabolism. The polypeptide is 2-oxoglutarate oxidoreductase subunit KorB (korB) (Mycobacterium tuberculosis (strain ATCC 25618 / H37Rv)).